Here is a 1340-residue protein sequence, read N- to C-terminus: Lysine-specific demethylase ELF6 (1340 aa).

The region spanning 16-57 (APVFRPTDTEFADPIAYISKIEKEASAFGICKIIPPLPKPSK) is the JmjN domain. The tract at residues 195 to 245 (QRKRRGRGFYQRKTENNDPSGKNGEKSSPEVEKAPLASTSLSSQDSSKQKN) is disordered. The segment covering 217–227 (NGEKSSPEVEK) has biased composition (basic and acidic residues). Positions 262–428 (NSSWNLQMIA…VAKEAAVRRA (167 aa)) constitute a JmjC domain. Positions 305, 307, and 396 each coordinate Fe cation. Positions 818 to 825 (GKKEEKII) match the Nuclear localization signal 1 motif. Residues 1092 to 1225 (GEPLESSDIL…SRQQEVPTTT (134 aa)) form a disordered region. The segment covering 1099-1115 (DILSSSNGDEASSNGLQ) has biased composition (polar residues). Positions 1124–1133 (ESEVSSSENT) are enriched in low complexity. The span at 1188–1201 (SLKHTETSDEEKKP) shows a compositional bias: basic and acidic residues. Residues 1215–1225 (GSRQQEVPTTT) show a composition bias toward polar residues. 4 C2H2-type zinc fingers span residues 1228 to 1250 (NRCY…THKR), 1251 to 1275 (NRCT…QRVH), 1281 to 1305 (FECS…LRLH), and 1311 to 1337 (YICK…KTMH). 16 residues coordinate Zn(2+): cysteine 1230, cysteine 1235, histidine 1248, cysteine 1253, cysteine 1258, histidine 1265, histidine 1271, histidine 1275, cysteine 1283, cysteine 1288, histidine 1301, histidine 1305, cysteine 1313, cysteine 1318, histidine 1331, and histidine 1337. The Nuclear localization signal 2 signature appears at 1248–1255 (HKRNRCTH). The segment at 1260 to 1333 (KKFRAHKYLV…FVSDYSRHRR (74 aa)) is DNA-binding.

It belongs to the JHDM3 histone demethylase family. Interacts with BZR2 (via N-terminus). Expressed at low levels in seedlings, cotyledons and leaves. Detected in inflorescences, stems, roots and siliques but not in shoot apical meristems or root tips. Accumulates in flowers and embryos.

Its subcellular location is the nucleus. It carries out the reaction N(6),N(6),N(6)-trimethyl-L-lysyl(27)-[histone H3] + 2-oxoglutarate + O2 = N(6),N(6)-dimethyl-L-lysyl(27)-[histone H3] + formaldehyde + succinate + CO2. It catalyses the reaction N(6),N(6)-dimethyl-L-lysyl(27)-[histone H3] + 2-oxoglutarate + O2 = N(6)-methyl-L-lysyl(27)-[histone H3] + formaldehyde + succinate + CO2. Functionally, histone demethylase that demethylates 'Lys-27' (H3K27me) of histone H3, thus acting as a positive regulator of gene expression. Demethylates tri-methylated (H3K27me3) and di-methylated (H3K27me2) H3K27me. Inactive on H3K27me1, H3K4me3, H3K9me2 and H3K36me3. Acts as a repressor of the photoperiodic flowering pathway and of FT. May also be active on H3K4me. Binds around the transcription start site of the FT locus. Required for epigenetic reprogramming by resetting the expression of the floral repressor FLC locus, thus aluviating cold-mediated FLC epigenetically silencing occurring during vernalization and preventing inapropriate epigenetic states inheritence. Together with REF6, required for H3K27me3 resetting (especially in constitutive heterochromatin within the pericentromeric regions) and transgenerational inheritance of histone marks, thus acting in safeguarding genome and epigenome integrity during sexual reproduction. The chain is Lysine-specific demethylase ELF6 from Arabidopsis thaliana (Mouse-ear cress).